Consider the following 232-residue polypeptide: MSNVDHAEIAKFEALAHRWWDRESEFKPLHDINPLRVNWIDERAGLAGKKVLDIGCGGGILSEAMAQRGANVTGIDMGEAPLAVARLHQLESGVAVDYRQITAEQMAEEMPGQFDVVTCLEMLEHVPDPASVIRACHRLVKPGGQVFLSTINRNPKAYLFAVIGAEYILQLLPRGTHDFRKFIRPSELGAWSREAGLEVKDIIGLTYNPLTKHYKLANDVDVNYMVQTQREA.

Arg-36, Gly-55, Asp-76, and Leu-120 together coordinate S-adenosyl-L-methionine.

This sequence belongs to the methyltransferase superfamily. UbiG/COQ3 family.

It carries out the reaction a 3-demethylubiquinol + S-adenosyl-L-methionine = a ubiquinol + S-adenosyl-L-homocysteine + H(+). The enzyme catalyses a 3-(all-trans-polyprenyl)benzene-1,2-diol + S-adenosyl-L-methionine = a 2-methoxy-6-(all-trans-polyprenyl)phenol + S-adenosyl-L-homocysteine + H(+). It participates in cofactor biosynthesis; ubiquinone biosynthesis. In terms of biological role, O-methyltransferase that catalyzes the 2 O-methylation steps in the ubiquinone biosynthetic pathway. The polypeptide is Ubiquinone biosynthesis O-methyltransferase (Pseudomonas aeruginosa (strain UCBPP-PA14)).